A 680-amino-acid chain; its full sequence is Protein FAR1-RELATED SEQUENCE 11 (680 aa).

A disordered region spans residues 1-36; sequence MSDDPGQMLLIYDDPSDQRSLSLDDASSTEESPDDN. Positions 62–156 constitute an FAR1 domain; the sequence is EFYSTFAKRC…ANHHNHELLE (95 aa). Positions 277–373 constitute an MULE domain; it reads AVVFDTTHRL…CIWMVVGKFP (97 aa). The segment at 556–589 adopts an SWIM-type zinc-finger fold; sequence YWVPQEGIISCSCQLFEFSGFLCRHALRVLSTGN.

It belongs to the FHY3/FAR1 family. As to expression, expressed in hypocotyls, rosette and cauline leaves, inflorescences stems, flowers and siliques.

It localises to the nucleus. Functionally, putative transcription activator involved in regulating light control of development. The polypeptide is Protein FAR1-RELATED SEQUENCE 11 (FRS11) (Arabidopsis thaliana (Mouse-ear cress)).